The following is a 234-amino-acid chain: Thiamine-phosphate synthase (234 aa).

4-amino-2-methyl-5-(diphosphooxymethyl)pyrimidine-binding positions include 65 to 69 and asparagine 97; that span reads QYRNK. Residues aspartate 98 and aspartate 117 each coordinate Mg(2+). Residue serine 136 coordinates 4-amino-2-methyl-5-(diphosphooxymethyl)pyrimidine. 163 to 165 is a 2-[(2R,5Z)-2-carboxy-4-methylthiazol-5(2H)-ylidene]ethyl phosphate binding site; that stretch reads SHT. Residue lysine 166 participates in 4-amino-2-methyl-5-(diphosphooxymethyl)pyrimidine binding. 2-[(2R,5Z)-2-carboxy-4-methylthiazol-5(2H)-ylidene]ethyl phosphate-binding positions include glycine 192 and 212-213; that span reads IS.

It belongs to the thiamine-phosphate synthase family. Mg(2+) is required as a cofactor.

The enzyme catalyses 2-[(2R,5Z)-2-carboxy-4-methylthiazol-5(2H)-ylidene]ethyl phosphate + 4-amino-2-methyl-5-(diphosphooxymethyl)pyrimidine + 2 H(+) = thiamine phosphate + CO2 + diphosphate. The catalysed reaction is 2-(2-carboxy-4-methylthiazol-5-yl)ethyl phosphate + 4-amino-2-methyl-5-(diphosphooxymethyl)pyrimidine + 2 H(+) = thiamine phosphate + CO2 + diphosphate. It carries out the reaction 4-methyl-5-(2-phosphooxyethyl)-thiazole + 4-amino-2-methyl-5-(diphosphooxymethyl)pyrimidine + H(+) = thiamine phosphate + diphosphate. Its pathway is cofactor biosynthesis; thiamine diphosphate biosynthesis; thiamine phosphate from 4-amino-2-methyl-5-diphosphomethylpyrimidine and 4-methyl-5-(2-phosphoethyl)-thiazole: step 1/1. Functionally, condenses 4-methyl-5-(beta-hydroxyethyl)thiazole monophosphate (THZ-P) and 2-methyl-4-amino-5-hydroxymethyl pyrimidine pyrophosphate (HMP-PP) to form thiamine monophosphate (TMP). The protein is Thiamine-phosphate synthase of Xylella fastidiosa (strain 9a5c).